Reading from the N-terminus, the 183-residue chain is Ribulose bisphosphate carboxylase small subunit, chloroplastic 5 (183 aa).

Residues 1–42 (MAAAMMNKSVLLNKQCGKPAAVPKVVMSKGGFARTSAVNKNR) constitute a chloroplast transit peptide.

It belongs to the RuBisCO small chain family. As to quaternary structure, heterohexadecamer of 8 large and 8 small subunits.

Its subcellular location is the plastid. The protein resides in the chloroplast. RuBisCO catalyzes two reactions: the carboxylation of D-ribulose 1,5-bisphosphate, the primary event in carbon dioxide fixation, as well as the oxidative fragmentation of the pentose substrate. Both reactions occur simultaneously and in competition at the same active site. Although the small subunit is not catalytic it is essential for maximal activity. The protein is Ribulose bisphosphate carboxylase small subunit, chloroplastic 5 of Acetabularia acetabulum (Mermaid's wine glass).